The primary structure comprises 215 residues: Adenylate kinase (215 aa).

An ATP-binding site is contributed by 10-15 (GAGKGT). An NMP region spans residues 30 to 59 (STGDMLRAAVKAGTPIGLKAKAVMEAGELV). AMP-binding positions include T31, R36, 57-59 (ELV), 85-88 (GYPR), and Q92. Residues 126–163 (GRYTCANCGEGYHDRFKQPKVAGVCDVCGSAEFKRRPD) form an LID region. R127 provides a ligand contact to ATP. C130, C133, C150, and C153 together coordinate Zn(2+). Positions 160 and 172 each coordinate AMP. Position 200 (A200) interacts with ATP.

The protein belongs to the adenylate kinase family. In terms of assembly, monomer.

Its subcellular location is the cytoplasm. The catalysed reaction is AMP + ATP = 2 ADP. The protein operates within purine metabolism; AMP biosynthesis via salvage pathway; AMP from ADP: step 1/1. Functionally, catalyzes the reversible transfer of the terminal phosphate group between ATP and AMP. Plays an important role in cellular energy homeostasis and in adenine nucleotide metabolism. This Rhizorhabdus wittichii (strain DSM 6014 / CCUG 31198 / JCM 15750 / NBRC 105917 / EY 4224 / RW1) (Sphingomonas wittichii) protein is Adenylate kinase.